We begin with the raw amino-acid sequence, 124 residues long: BLOC-1-related complex subunit 8 (124 aa).

The disordered stretch occupies residues Ser102–Pro124.

The protein belongs to the BORCS8 family.

The protein localises to the lysosome membrane. As part of a BORC-like complex, it may play a role in the movement and localization of lysosomes at the cell periphery. Associated with the cytosolic face of lysosomes, this complex may couple lysosomes to microtubule plus-end-directed kinesin motors, driving lysosome movement toward the cell periphery. This chain is BLOC-1-related complex subunit 8, found in Danio rerio (Zebrafish).